The primary structure comprises 460 residues: Lipase member H-A (460 aa).

The signal sequence occupies residues 1-26 (MLLSFYFNGLLLVGCLLSWGRSDTEG). Residues N67 and N75 are each glycosylated (N-linked (GlcNAc...) asparagine). S163 functions as the Nucleophile in the catalytic mechanism. A glycan (N-linked (GlcNAc...) asparagine) is linked at N177. Residue D187 is the Charge relay system of the active site. A disulfide bridge connects residues C242 and C255. H257 (charge relay system) is an active-site residue. Cystine bridges form between C279–C290 and C293–C301. An N-linked (GlcNAc...) asparagine glycan is attached at N289. The N-linked (GlcNAc...) asparagine glycan is linked to N366. C436 and C455 are oxidised to a cystine.

It belongs to the AB hydrolase superfamily. Lipase family.

Its subcellular location is the secreted. The protein resides in the cell membrane. The catalysed reaction is 1-hexadecanoyl-2-(9Z-octadecenoyl)-sn-glycero-3-phosphate + H2O = 2-(9Z-octadecenoyl)-sn-glycero-3-phosphate + hexadecanoate + H(+). In terms of biological role, hydrolyzes specifically phosphatidic acid (PA) to produce 2-acyl lysophosphatidic acid (LPA; a potent bioactive lipid mediator) and fatty acid. Does not hydrolyze other phospholipids, like phosphatidylserine (PS), phosphatidylcholine (PC) and phosphatidylethanolamine (PE) or triacylglycerol (TG). The chain is Lipase member H-A (liph-a) from Xenopus laevis (African clawed frog).